The sequence spans 497 residues: 4,4'-diaponeurosporene oxygenase (497 aa).

7-19 (VIGGGLGGISAAI) is a binding site for FAD.

It belongs to the carotenoid/retinoid oxidoreductase family. CrtP subfamily. It depends on FAD as a cofactor.

The enzyme catalyses all-trans-4,4'-diaponeurosporene + 2 AH2 + 2 O2 = 4,4'-diaponeurosporenal + 2 A + 3 H2O. It functions in the pathway carotenoid biosynthesis; staphyloxanthin biosynthesis; staphyloxanthin from farnesyl diphosphate: step 3/5. Functionally, involved in the biosynthesis of the yellow-orange carotenoid staphyloxanthin, which plays a role in the virulence via its protective function against oxidative stress. Catalyzes the oxidation of the terminal methyl side group of 4,4'-diaponeurosporene to form 4,4'-diaponeurosporen-4-al. The C40 carotenoid lycopene is a poor substrate. In Staphylococcus aureus (strain Mu50 / ATCC 700699), this protein is 4,4'-diaponeurosporene oxygenase.